The sequence spans 280 residues: Phosphate import ATP-binding protein PstB (280 aa).

One can recognise an ABC transporter domain in the interval 34-275 (IEVKNLNFFY…PARKETEDYI (242 aa)). 66 to 73 (GPSGCGKS) lines the ATP pocket.

It belongs to the ABC transporter superfamily. Phosphate importer (TC 3.A.1.7) family. In terms of assembly, the complex is composed of two ATP-binding proteins (PstB), two transmembrane proteins (PstC and PstA) and a solute-binding protein (PstS).

The protein resides in the cell inner membrane. The catalysed reaction is phosphate(out) + ATP + H2O = ADP + 2 phosphate(in) + H(+). Functionally, part of the ABC transporter complex PstSACB involved in phosphate import. Responsible for energy coupling to the transport system. This chain is Phosphate import ATP-binding protein PstB, found in Burkholderia mallei (strain ATCC 23344).